The primary structure comprises 192 residues: Ion-translocating oxidoreductase complex subunit B (192 aa).

The tract at residues 1 to 26 is hydrophobic; the sequence is MNAIWIAVAAVSLLALAFGAILGYAS. The 60-residue stretch at 32–91 folds into the 4Fe-4S domain; sequence EDDPVVEKIDEILPQSQCGQCGYPGCRPYAEAISCNGEKINRCAPGGEAVMLKIAELLNV. Residues C49, C52, C57, C74, C117, C120, C123, C127, C147, C150, C153, and C157 each coordinate [4Fe-4S] cluster. 4Fe-4S ferredoxin-type domains are found at residues 108–137 and 138–167; these read MVAVIDENNCIGCTKCIQACPVDAIVGATR and AMHTVMSDLCTGCNLCVDPCPTHCISLQPV.

This sequence belongs to the 4Fe4S bacterial-type ferredoxin family. RnfB subfamily. The complex is composed of six subunits: RsxA, RsxB, RsxC, RsxD, RsxE and RsxG. Requires [4Fe-4S] cluster as cofactor.

It localises to the cell inner membrane. Part of a membrane-bound complex that couples electron transfer with translocation of ions across the membrane. Required to maintain the reduced state of SoxR. The polypeptide is Ion-translocating oxidoreductase complex subunit B (Escherichia coli O81 (strain ED1a)).